The following is a 130-amino-acid chain: Protein BLT4 (130 aa).

Positions 1–25 (MARTAATKLALVPLVAAMLLVAADA) are cleaved as a signal peptide. The disordered stretch occupies residues 80–130 (VPARTTPAGPQASPPGAASASPTRSAPVSTALRSTDRTRAPHISSDRRLVG). Low complexity predominate over residues 84 to 110 (TTPAGPQASPPGAASASPTRSAPVSTA). Residues 113-130 (STDRTRAPHISSDRRLVG) are compositionally biased toward basic and acidic residues.

Belongs to the plant LTP family. As to expression, shoot meristem.

Its function is as follows. Possible dehydrative stress responsive protein. Not shown to have lipid transfer activity. The polypeptide is Protein BLT4 (BLT4) (Hordeum vulgare (Barley)).